The chain runs to 172 residues: MNHFELFNLPVALDIDLASLKSNFLSLQQQYHPDKAADKDQALIKSSEINQAFKTLSQVDSRAAYLLALKKQDHHLDQSISDFEFLQSALELREQLDEATSSEHLRTLRLEVQQWIDGLVREFKIDYSEEDWAEARDTVRKLRFFQRVLNDIDKAEDQLLDDEDSFDLDDDF.

Positions 2 to 69 (NHFELFNLPV…DSRAAYLLAL (68 aa)) constitute a J domain.

The protein belongs to the HscB family. As to quaternary structure, interacts with HscA and stimulates its ATPase activity.

Functionally, co-chaperone involved in the maturation of iron-sulfur cluster-containing proteins. Seems to help targeting proteins to be folded toward HscA. The polypeptide is Co-chaperone protein HscB homolog (Acinetobacter baumannii (strain AB307-0294)).